The chain runs to 72 residues: Large ribosomal subunit protein bL31 (72 aa).

Cysteine 17, cysteine 19, cysteine 37, and cysteine 40 together coordinate Zn(2+).

This sequence belongs to the bacterial ribosomal protein bL31 family. Type A subfamily. Part of the 50S ribosomal subunit. Zn(2+) serves as cofactor.

Binds the 23S rRNA. This chain is Large ribosomal subunit protein bL31, found in Clostridium botulinum (strain ATCC 19397 / Type A).